The chain runs to 70 residues: KNGDLRTPVITIFDARGCKDHANKEYTGPKAGGADDEMCVKVAMQKIAVAEDAAALVLKECLSELKARKK.

R16 contacts (2R,3E)-phycocyanobilin. Residues C18, Y26, and K41 each contribute to the mesobiliverdin site.

This sequence belongs to the phycoerythrin family. As to quaternary structure, heterotetramer of 2 different alpha chains and 2 identical beta chains which form 2 alpha-beta heterodimers within the heterotetramer. Contains one phycocyanobilin chromophore, one mesobiliverdin chromophore and one 15,16-dihydrobiliverdin chromophore with binding mediated by both the alpha and beta subunits.

The protein localises to the plastid. It localises to the chloroplast thylakoid membrane. Functionally, light-harvesting photosynthetic tetrapyrrole chromophore-protein from the phycobiliprotein complex. The protein is Phycocyanin-645 alpha-2 chain of Chroomonas sp.